The chain runs to 330 residues: Putative ADP-ribosyl glycohydrolase L543 (330 aa).

It belongs to the ADP-ribosylglycohydrolase family.

In Acanthamoeba polyphaga mimivirus (APMV), this protein is Putative ADP-ribosyl glycohydrolase L543.